Consider the following 70-residue polypeptide: Protein SlyX homolog (70 aa).

Belongs to the SlyX family.

This chain is Protein SlyX homolog, found in Shewanella sp. (strain MR-4).